Consider the following 419-residue polypeptide: MAASTTCPARSMASVSRALRPRPHAAIASAAVRTAARLGGGLGIVCSMPSYGRKEKEEWGLTIASAPATTAAPALRSCQLLCKAEANISSNLPESIPSEANQYEKIVELLTTLFPVWVILGTIIGIYKPSMVTWLETDLFTVGLGFLMLSMGLTLTFEDFRRCMRNPWTVGVGFLAQYLIKPMLGFAIAMTLKLSAPLATGLILVSCCPGGQASNVATYISKGNVALSVLMTTCSTIGAIVMTPLLTKLLAGQLVPVDAAGLAISTFQVVLLPTIVGVLAHEYFPKFTERIISITPLIGVLLTTLLCASPIGQVSEVLKAQGGQLIIPVALLHVAAFALGYWLSKVSSFGESTSRTISIECGMQSSALGFLLAQKHFTNPLVAVPSAVSVVCMALGGSALAVFWRNRGLPANDKDDFKE.

A chloroplast-targeting transit peptide spans 1–45 (MAASTTCPARSMASVSRALRPRPHAAIASAAVRTAARLGGGLGIV). 9 consecutive transmembrane segments (helical) span residues 106–126 (IVELLTTLFPVWVILGTIIGI), 137–157 (TDLFTVGLGFLMLSMGLTLTF), 170–190 (VGVGFLAQYLIKPMLGFAIAM), 194–214 (LSAPLATGLILVSCCPGGQAS), 225–245 (VALSVLMTTCSTIGAIVMTPL), 259–279 (AAGLAISTFQVVLLPTIVGVL), 291–311 (IISITPLIGVLLTTLLCASPI), 323–343 (GQLIIPVALLHVAAFALGYWL), and 384–404 (VPSAVSVVCMALGGSALAVFW).

Belongs to the bile acid:sodium symporter (BASS) (TC 2.A.28) family.

Its subcellular location is the membrane. It localises to the plastid. It is found in the chloroplast envelope. In terms of biological role, may function as sodium-coupled metabolite transporter across the chloroplast envelope. This chain is Probable sodium/metabolite cotransporter BASS2, chloroplastic (BASS2), found in Oryza sativa subsp. japonica (Rice).